We begin with the raw amino-acid sequence, 293 residues long: Protoheme IX farnesyltransferase (293 aa).

9 consecutive transmembrane segments (helical) span residues 9-29, 38-58, 86-106, 111-131, 137-157, 167-187, 211-231, 234-254, and 271-291; these read LIKP…FLLA, YIIL…SCVL, FVKN…LFLG, LLTI…YSLW, IYST…GYCT, WLLF…ITIF, IHMI…TVLG, SYTF…TGWY, and ILSI…SIFI.

Belongs to the UbiA prenyltransferase family. Protoheme IX farnesyltransferase subfamily.

Its subcellular location is the cell inner membrane. The enzyme catalyses heme b + (2E,6E)-farnesyl diphosphate + H2O = Fe(II)-heme o + diphosphate. It functions in the pathway porphyrin-containing compound metabolism; heme O biosynthesis; heme O from protoheme: step 1/1. Functionally, converts heme B (protoheme IX) to heme O by substitution of the vinyl group on carbon 2 of heme B porphyrin ring with a hydroxyethyl farnesyl side group. This is Protoheme IX farnesyltransferase from Blochmanniella floridana.